The primary structure comprises 455 residues: UDP-N-acetylmuramate--L-alanine ligase (455 aa).

109-115 contributes to the ATP binding site; sequence GTHGKTT.

This sequence belongs to the MurCDEF family.

The protein localises to the cytoplasm. It carries out the reaction UDP-N-acetyl-alpha-D-muramate + L-alanine + ATP = UDP-N-acetyl-alpha-D-muramoyl-L-alanine + ADP + phosphate + H(+). The protein operates within cell wall biogenesis; peptidoglycan biosynthesis. Cell wall formation. In Caldicellulosiruptor bescii (strain ATCC BAA-1888 / DSM 6725 / KCTC 15123 / Z-1320) (Anaerocellum thermophilum), this protein is UDP-N-acetylmuramate--L-alanine ligase.